We begin with the raw amino-acid sequence, 1247 residues long: DNA-directed RNA polymerase subunit beta (1247 aa).

Belongs to the RNA polymerase beta chain family. In plastids the minimal PEP RNA polymerase catalytic core is composed of four subunits: alpha, beta, beta', and beta''. When a (nuclear-encoded) sigma factor is associated with the core the holoenzyme is formed, which can initiate transcription.

Its subcellular location is the plastid. The catalysed reaction is RNA(n) + a ribonucleoside 5'-triphosphate = RNA(n+1) + diphosphate. Its function is as follows. DNA-dependent RNA polymerase catalyzes the transcription of DNA into RNA using the four ribonucleoside triphosphates as substrates. The sequence is that of DNA-directed RNA polymerase subunit beta (rpoB) from Helicosporidium sp. subsp. Simulium jonesii (Green alga).